A 257-amino-acid polypeptide reads, in one-letter code: Putative hydro-lyase Bcenmc03_3969 (257 aa).

This sequence belongs to the D-glutamate cyclase family.

The chain is Putative hydro-lyase Bcenmc03_3969 from Burkholderia orbicola (strain MC0-3).